Consider the following 381-residue polypeptide: PqqA peptide cyclase (381 aa).

The Radical SAM core domain occupies 12–228 (VGPPLWLLAE…AEYRQRLAAE (217 aa)). The [4Fe-4S] cluster site is built by Cys-26, Cys-30, and Cys-33.

The protein belongs to the radical SAM superfamily. PqqE family. In terms of assembly, interacts with PqqD. The interaction is necessary for activity of PqqE. Requires [4Fe-4S] cluster as cofactor.

The catalysed reaction is [PQQ precursor protein] + S-adenosyl-L-methionine = E-Y cross-linked-[PQQ precursor protein] + 5'-deoxyadenosine + L-methionine + H(+). It participates in cofactor biosynthesis; pyrroloquinoline quinone biosynthesis. Its function is as follows. Catalyzes the cross-linking of a glutamate residue and a tyrosine residue in the PqqA protein as part of the biosynthesis of pyrroloquinoline quinone (PQQ). In Pseudomonas aeruginosa (strain LESB58), this protein is PqqA peptide cyclase.